The chain runs to 624 residues: Chaperone protein HtpG (624 aa).

Residues 1–336 (MKGQETRGFQ…SNDLPLNVSR (336 aa)) are a; substrate-binding. Residues 337–552 (EILQDSTVTR…ADEMSTQMAK (216 aa)) are b. The tract at residues 553–624 (LFAAAGQSVP…IRRMNQLLVS (72 aa)) is c.

Belongs to the heat shock protein 90 family. Homodimer.

It localises to the cytoplasm. In terms of biological role, molecular chaperone. Has ATPase activity. The chain is Chaperone protein HtpG from Salmonella paratyphi A (strain ATCC 9150 / SARB42).